Reading from the N-terminus, the 198-residue chain is Nudix hydrolase 21, chloroplastic (198 aa).

Residues 1–37 (MISLFISNFSNLSNLSPTFDNMNMNIPSKKIVPVPTP) constitute a chloroplast transit peptide. Residues 59-191 (GYRQVVGCVP…WMREALEAFI (133 aa)) form the Nudix hydrolase domain. The short motif at 98–119 (GGWEIDESIEEAALRETIEEAG) is the Nudix box element. Residues E113 and E117 each coordinate Mg(2+).

It belongs to the Nudix hydrolase family. Requires Mg(2+) as cofactor. The cofactor is Mn(2+). As to expression, expressed in roots, leaves, stems and inflorescences.

It localises to the plastid. The protein resides in the chloroplast. In terms of biological role, probably mediates the hydrolysis of some nucleoside diphosphate derivatives. The polypeptide is Nudix hydrolase 21, chloroplastic (NUDT21) (Arabidopsis thaliana (Mouse-ear cress)).